We begin with the raw amino-acid sequence, 238 residues long: MTVGIARKLSRDKAHRDALLKNLACQLFQHESIVSTHAKCKEASRVAERIITWTKRAITTSNSVAQAELKSQIQSQLFLAGDNRKLMKRLFSEIAPRYLERPGGYTRVLRLEPRANDSAPQSVLELVDSPVMSESHTVNRGNLKMWLLVKSVINDDANQLPHNPLTLQNLHKVAKFKAEAQLHGEIMLIKQVLLKEMSLPYDEALENERTQALLKEVYSSSLPKKTKKPSSYVMVPRP.

This sequence belongs to the bacterial ribosomal protein bL17 family. Component of the mitochondrial large ribosomal subunit (mt-LSU). Mature yeast 74S mitochondrial ribosomes consist of a small (37S) and a large (54S) subunit. The 37S small subunit contains a 15S ribosomal RNA (15S mt-rRNA) and 34 different proteins. The 54S large subunit contains a 21S rRNA (21S mt-rRNA) and 46 different proteins.

The protein resides in the mitochondrion. Its function is as follows. Component of the mitochondrial ribosome (mitoribosome), a dedicated translation machinery responsible for the synthesis of mitochondrial genome-encoded proteins, including at least some of the essential transmembrane subunits of the mitochondrial respiratory chain. The mitoribosomes are attached to the mitochondrial inner membrane and translation products are cotranslationally integrated into the membrane. The chain is Large ribosomal subunit protein bL17m (MRPL8) from Saccharomyces cerevisiae (strain ATCC 204508 / S288c) (Baker's yeast).